Consider the following 305-residue polypeptide: Protein FdhE homolog (305 aa).

Belongs to the FdhE family.

The protein localises to the cytoplasm. Functionally, necessary for formate dehydrogenase activity. This Haemophilus ducreyi (strain 35000HP / ATCC 700724) protein is Protein FdhE homolog.